A 288-amino-acid polypeptide reads, in one-letter code: dTDP-4-keto-6-deoxy-D-glucose reductase (288 aa).

NADH contacts are provided by residues 12 to 14, 38 to 39, 62 to 64, Tyr-127, and Lys-131; these read GML, DI, and AWT. NADPH is bound by residues 13 to 14, 38 to 39, 62 to 64, Tyr-127, and Lys-131; these read ML, DI, and AWT. The active-site Proton donor/acceptor is the Tyr-127.

The protein belongs to the dTDP-4-dehydrorhamnose reductase family. Mg(2+) serves as cofactor.

Its pathway is antibiotic biosynthesis; novobiocin biosynthesis. Reduces the product formed from the reaction of NovW with dTDP-4-keto-6-deoxy-D-glucose to result in dTDP-5-methyl-L-rhamnose in the novobiocin biosynthesis pathway, an aminocoumarin family antibiotic that targets bacterial DNA gyrases. The polypeptide is dTDP-4-keto-6-deoxy-D-glucose reductase (novS) (Streptomyces niveus (Streptomyces spheroides)).